Consider the following 288-residue polypeptide: PAK4-inhibitor inka2 (288 aa).

The inka box stretch occupies residues 159 to 196 (DPTDWTTSLLTRGRNRQPLVLGDNSFADLIKNWMDLPE).

The protein belongs to the INKA family.

It is found in the nucleus. Its function is as follows. Inhibitor of the serine/threonine-protein kinase pak4/pak5. Acts by binding pak4/pak5 in a substrate-like manner, inhibiting the protein kinase activity. The protein is PAK4-inhibitor inka2 of Danio rerio (Zebrafish).